Consider the following 303-residue polypeptide: Phytochrome-associated serine/threonine-protein phosphatase 3 (303 aa).

Residues aspartate 50, histidine 52, aspartate 78, and asparagine 110 each contribute to the Zn(2+) site. The Proton donor role is filled by histidine 111. 2 residues coordinate Zn(2+): histidine 160 and histidine 234.

Belongs to the PPP phosphatase family. PP-6 (PP-V) subfamily. In terms of assembly, interacts with PHYA and PHYB, mostly when they are phosphorylated and in Pfr forms. Interacts with TAP46. Interacts with NRP. Interacts with PIN1 and PIN2. Interacts with ABI5. Interacts with PIF3 and PIF4. Protein phosphatase 6 (PP6) holoenzyme is a heterotrimeric complex formed by the catalytic subunit FYPP, a SAPS domain-containing subunit (SAL) and a protein phosphatase 2A regulatory subunit A (PP2AA). Requires Zn(2+) as cofactor. Mostly expressed in flowers. Also detected to a lower extent in stems and leaves. Expressed in roots.

Its subcellular location is the cytoplasm. The enzyme catalyses O-phospho-L-seryl-[protein] + H2O = L-seryl-[protein] + phosphate. It carries out the reaction O-phospho-L-threonyl-[protein] + H2O = L-threonyl-[protein] + phosphate. Catalytic subunit of protein phosphatase 6 (PP6). Dephosphorylates phosphorylated phytochromes, with a preference toward Pfr forms. Plays a major role in the photoperiodic control of flowering time in long days by modulating phytochrome signals in flowering time control. Involved in the regulation of polar auxin transport in roots. Dephosphorylates directly the auxin efflux carriers PIN1 and PIN2, thus promoting their proper polar localization in root cell plasma membrane. Acts antagonistically with the protein kinase PID to regulate the reversible phosphorylation of PIN and polar targeting, subsequently impacting polar auxin transport and plant development. Involved in the regulation of abscisic acid (ABA) signaling during seed germination and postgermination seedling growth. Functions as a negative regulator of ABA signaling through direct dephosphorylation and destabilization of ABI5 protein. Acts antagonistically with the protein kinase SRK2E/SNRK2.6 to regulate ABI5 phosphorylation and ABA responses. Involved in the regulation of phosphorylation status in hypocotyl phototropism. Involved in the negative regulation of photomorphogenesis by controlling the stability and transcriptional activity of PIF3 and PIF4 proteins in the dark, via the regulation of their phosphorylation status. The polypeptide is Phytochrome-associated serine/threonine-protein phosphatase 3 (Arabidopsis thaliana (Mouse-ear cress)).